Here is a 227-residue protein sequence, read N- to C-terminus: Pyridoxine-5'-phosphate oxidase (227 aa).

20 to 23 (RKDY) serves as a coordination point for pyridoxal 5'-phosphate. 75 to 78 (RVVL) is an FMN binding site. Lys80 is a binding site for pyridoxal 5'-phosphate. FMN is bound by residues 90–91 (YT), 96–97 (RK), and Gln117. Pyridoxal 5'-phosphate contacts are provided by Tyr135, Arg139, and Ser143. Residues 152-153 (FQ) and Trp197 each bind FMN. 203–205 (RIH) lines the pyridoxal 5'-phosphate pocket. Residue Arg207 coordinates FMN.

Belongs to the pyridoxamine 5'-phosphate oxidase family. In terms of assembly, homodimer. It depends on FMN as a cofactor.

It catalyses the reaction pyridoxamine 5'-phosphate + O2 + H2O = pyridoxal 5'-phosphate + H2O2 + NH4(+). The enzyme catalyses pyridoxine 5'-phosphate + O2 = pyridoxal 5'-phosphate + H2O2. It participates in cofactor metabolism; pyridoxal 5'-phosphate salvage; pyridoxal 5'-phosphate from pyridoxamine 5'-phosphate: step 1/1. Its pathway is cofactor metabolism; pyridoxal 5'-phosphate salvage; pyridoxal 5'-phosphate from pyridoxine 5'-phosphate: step 1/1. Catalyzes the oxidation of either pyridoxine 5'-phosphate (PNP) or pyridoxamine 5'-phosphate (PMP) into pyridoxal 5'-phosphate (PLP). The polypeptide is Pyridoxine-5'-phosphate oxidase (pnpo) (Dictyostelium discoideum (Social amoeba)).